Reading from the N-terminus, the 291-residue chain is Elongation factor Ts (291 aa).

Positions 81–84 (TDFV) are involved in Mg(2+) ion dislocation from EF-Tu. Residues 271 to 291 (EGKEKKDESFADEVMAQVRDS) form a disordered region.

The protein belongs to the EF-Ts family.

The protein localises to the cytoplasm. Functionally, associates with the EF-Tu.GDP complex and induces the exchange of GDP to GTP. It remains bound to the aminoacyl-tRNA.EF-Tu.GTP complex up to the GTP hydrolysis stage on the ribosome. The polypeptide is Elongation factor Ts (Halorhodospira halophila (strain DSM 244 / SL1) (Ectothiorhodospira halophila (strain DSM 244 / SL1))).